Here is a 503-residue protein sequence, read N- to C-terminus: Envelope glycoprotein p57 (503 aa).

The N-terminal stretch at 1-22 (MQLSMSFLIGFGTLVLALSART) is a signal peptide. Residues 23 to 467 (FDLQGLSCNT…FLNPLGWLRD (445 aa)) are Extracellular-facing. Residues asparagine 63, asparagine 109, asparagine 139, asparagine 192, asparagine 196, asparagine 202, asparagine 221, asparagine 230, and asparagine 235 are each glycosylated (N-linked (GlcNAc...) asparagine; by host). The segment at 274 to 315 (ILQSLLLGVFGTGIASASQFLRGWLNHPDIIGYIVNGVGVVW) is fusion peptide. N-linked (GlcNAc...) asparagine; by host glycosylation is found at asparagine 321, asparagine 328, asparagine 388, and asparagine 438. A helical transmembrane segment spans residues 468–488 (LLAWAAWLGGVLYLISLCVSL). Residues 489-503 (PASFARRRRLGRWQE) lie on the Cytoplasmic side of the membrane.

Post-translationally, glycosated; Stabilizes it. In terms of processing, a portion of p57 is cleaved into p27 and p29. p27 and p29 are called gp43 when glycosylated, as they seem to have the same molecular weight.

It localises to the host endoplasmic reticulum membrane. It is found in the virion. The protein resides in the host cell membrane. Unprocessed envelope protein p57 is thought to be involved in attachment of the virus to its cell surface receptor. This attachment induces virion internalization predominantly through clathrin-dependent endocytosis. Functionally, envelope protein p27 and p29 presumably linked by disulfide bond are the viral type II fusion protein, involved in pH-dependent fusion within early endosomes after internalization of the virion by endocytosis. This Borna disease virus 1 (BoDV-1) protein is Envelope glycoprotein p57 (G).